The primary structure comprises 532 residues: O-phosphoserine--tRNA(Cys) ligase (532 aa).

Residues 188–190 (HMT), 233–235 (SAS), 275–276 (YY), and N327 each bind substrate.

It belongs to the class-II aminoacyl-tRNA synthetase family. O-phosphoseryl-tRNA(Cys) synthetase subfamily. Homotetramer. Interacts with SepCysS.

It catalyses the reaction tRNA(Cys) + O-phospho-L-serine + ATP = O-phospho-L-seryl-tRNA(Cys) + AMP + diphosphate. In terms of biological role, catalyzes the attachment of O-phosphoserine (Sep) to tRNA(Cys). This Methanocella arvoryzae (strain DSM 22066 / NBRC 105507 / MRE50) protein is O-phosphoserine--tRNA(Cys) ligase.